The primary structure comprises 76 residues: MFTKALSVVLLTCALFSGQLMAGHKGHEFVWVKNVDHQLRHEADSDELRAVAEESAEGLREHFYWQKSRKPEAGQR.

The signal sequence occupies residues 1–22 (MFTKALSVVLLTCALFSGQLMA).

This is an uncharacterized protein from Escherichia coli O157:H7.